Reading from the N-terminus, the 90-residue chain is Small ribosomal subunit protein bS20 (90 aa).

It belongs to the bacterial ribosomal protein bS20 family.

Its function is as follows. Binds directly to 16S ribosomal RNA. This Mesomycoplasma hyopneumoniae (strain 232) (Mycoplasma hyopneumoniae) protein is Small ribosomal subunit protein bS20.